The sequence spans 432 residues: Ribosomal protein uS12 methylthiotransferase RimO (432 aa).

An MTTase N-terminal domain is found at 4–120; it reads HNVFLLSLGC…LLQAIGAQYR (117 aa). Positions 13, 49, 83, 144, 148, and 151 each coordinate [4Fe-4S] cluster. Residues 130 to 359 form the Radical SAM core domain; it reads LTPPHISYLK…MELQETIAKE (230 aa). Residues 362–429 form the TRAM domain; sequence QLFEGKELTV…AYELHGTITA (68 aa).

It belongs to the methylthiotransferase family. RimO subfamily. The cofactor is [4Fe-4S] cluster.

It localises to the cytoplasm. The enzyme catalyses L-aspartate(89)-[ribosomal protein uS12]-hydrogen + (sulfur carrier)-SH + AH2 + 2 S-adenosyl-L-methionine = 3-methylsulfanyl-L-aspartate(89)-[ribosomal protein uS12]-hydrogen + (sulfur carrier)-H + 5'-deoxyadenosine + L-methionine + A + S-adenosyl-L-homocysteine + 2 H(+). Its function is as follows. Catalyzes the methylthiolation of an aspartic acid residue of ribosomal protein uS12. This is Ribosomal protein uS12 methylthiotransferase RimO from Chlorobium phaeobacteroides (strain DSM 266 / SMG 266 / 2430).